Here is a 1308-residue protein sequence, read N- to C-terminus: Contactin-associated protein-like 4 (1308 aa).

The signal sequence occupies residues 1-25 (MGSVTGAVLKTLLLLSTQNWNRVEA). At 26-1241 (GNSYDCDDPL…LANAIKSDSA (1216 aa)) the chain is on the extracellular side. In terms of domain architecture, F5/8 type C spans 31–177 (CDDPLVSALP…IGMRIEVFGC (147 aa)). Cys-31 and Cys-177 are disulfide-bonded. Laminin G-like domains are found at residues 212-364 (FKTM…SFSC) and 398-547 (FRTW…IDSC). N-linked (GlcNAc...) asparagine glycans are attached at residues Asn-260, Asn-285, Asn-359, and Asn-538. 4 disulfides stabilise this stretch: Cys-332–Cys-364, Cys-515–Cys-547, Cys-553–Cys-564, and Cys-558–Cys-573. The region spanning 549–586 (ISDRCLPNYCEHGGECSQSWSTFHCNCTNTGYRGATCH) is the EGF-like 1 domain. A glycan (N-linked (GlcNAc...) asparagine) is linked at Asn-574. Cysteines 575 and 585 form a disulfide. The 206-residue stretch at 587 to 792 (NSIYEQSCEA…LLCQGDRSFW (206 aa)) folds into the Fibrinogen C-terminal domain. N-linked (GlcNAc...) asparagine glycans are attached at residues Asn-602, Asn-625, Asn-637, Asn-706, and Asn-748. The region spanning 793–957 (NSASFDTEAS…AQVTPEVQPG (165 aa)) is the Laminin G-like 3 domain. Intrachain disulfides connect Cys-931–Cys-958, Cys-962–Cys-975, Cys-969–Cys-984, and Cys-986–Cys-996. The region spanning 958 to 997 (CRGHCSSYGKLCRNGGKCRERPIGFFCDCTFSAYTGPFCS) is the EGF-like 2 domain. N-linked (GlcNAc...) asparagine glycosylation is found at Asn-1023 and Asn-1073. The region spanning 1046–1202 (FRTTRTPSLL…VTGHVTESSC (157 aa)) is the Laminin G-like 4 domain. Cys-1167 and Cys-1202 are joined by a disulfide. A helical transmembrane segment spans residues 1242–1262 (VIGGLIAVVIFILLCITAIAV). Residues 1263-1308 (RIYQQKRLYKRSEAKRSENVDSAEAVLKSELNIQNAVNENQKEYFF) are Cytoplasmic-facing.

This sequence belongs to the neurexin family. As to quaternary structure, interacts with TIAM1.

It localises to the presynaptic cell membrane. Presynaptic protein involved in both dopaminergic synaptic transmission and GABAergic system, thereby participating in the structural maturation of inhibitory interneuron synapses. Involved in the dopaminergic synaptic transmission by attenuating dopamine release through a presynaptic mechanism. Also participates in the GABAergic system. The sequence is that of Contactin-associated protein-like 4 (CNTNAP4) from Homo sapiens (Human).